Here is an 883-residue protein sequence, read N- to C-terminus: Integrator complex subunit 6-B (883 aa).

Residues 3-227 form the VWFA domain; the sequence is ILLFLLDTSA…QCLESLVQKI (225 aa). Residues 626 to 633 carry the Inhibitory loop motif; that stretch reads MMIDEADE.

It belongs to the Integrator subunit 6 family. In terms of assembly, component of the Integrator complex, composed of core subunits INTS1, INTS2, INTS3, INTS4, INTS5, INTS6, INTS7, INTS8, INTS9/RC74, INTS10, INTS11/CPSF3L, INTS12, INTS13, INTS14 and INTS15. The core complex associates with protein phosphatase 2A subunits PPP2CA and PPP2R1A, to form the Integrator-PP2A (INTAC) complex.

It localises to the nucleus. Its subcellular location is the chromosome. Functionally, component of the integrator complex, a multiprotein complex that terminates RNA polymerase II (Pol II) transcription in the promoter-proximal region of genes. The integrator complex provides a quality checkpoint during transcription elongation by driving premature transcription termination of transcripts that are unfavorably configured for transcriptional elongation: the complex terminates transcription by (1) catalyzing dephosphorylation of the C-terminal domain (CTD) of Pol II subunit POLR2A/RPB1 and SUPT5H/SPT5, (2) degrading the exiting nascent RNA transcript via endonuclease activity and (3) promoting the release of Pol II from bound DNA. The integrator complex is also involved in terminating the synthesis of non-coding Pol II transcripts, such as enhancer RNAs (eRNAs), small nuclear RNAs (snRNAs), telomerase RNAs and long non-coding RNAs (lncRNAs). Within the integrator complex, INTS6 acts as a molecular adapter that promotes assembly of protein phosphatase 2A (PP2A) subunits to the integrator core complex, promoting recruitment of PP2A to transcription pause-release checkpoint. The polypeptide is Integrator complex subunit 6-B (ints6-b) (Xenopus laevis (African clawed frog)).